The chain runs to 297 residues: Giardin subunit alpha-6 (297 aa).

Annexin repeat units lie at residues 3-72, 74-146, 153-222, and 226-295; these read TTVQ…AYLW, KPGD…HWIL, FDID…AAHY, and HPAR…ILWR.

This sequence belongs to the annexin family. Giardin subunit alpha subfamily.

Its subcellular location is the cytoplasm. It localises to the cytoskeleton. Functionally, giardins are involved in parasite attachment to the intestinal mucosa and in the cytoskeletal disassembly and reassembly that marks the transition from infectious trophozoite to transmissible cyst. They may interact with other cytoskeletal proteins such as microtubules in the microribbons or crossbridges, to maintain the integrity of the ventral disk. The sequence is that of Giardin subunit alpha-6 from Giardia intestinalis (Giardia lamblia).